Reading from the N-terminus, the 194-residue chain is Imidazoleglycerol-phosphate dehydratase (194 aa).

This sequence belongs to the imidazoleglycerol-phosphate dehydratase family.

Its subcellular location is the cytoplasm. It carries out the reaction D-erythro-1-(imidazol-4-yl)glycerol 3-phosphate = 3-(imidazol-4-yl)-2-oxopropyl phosphate + H2O. The protein operates within amino-acid biosynthesis; L-histidine biosynthesis; L-histidine from 5-phospho-alpha-D-ribose 1-diphosphate: step 6/9. This is Imidazoleglycerol-phosphate dehydratase from Chloroherpeton thalassium (strain ATCC 35110 / GB-78).